A 278-amino-acid chain; its full sequence is Shikimate dehydrogenase (NADP(+)) (278 aa).

Shikimate-binding positions include 19–21 (SLS) and Thr66. The active-site Proton acceptor is the Lys70. Residues Asn91 and Asp106 each coordinate shikimate. Residues 130-134 (GAGGS), 152-157 (NRTVEK), and Leu222 contribute to the NADP(+) site. Tyr224 provides a ligand contact to shikimate. Residue Gly245 coordinates NADP(+).

It belongs to the shikimate dehydrogenase family. Homodimer.

It catalyses the reaction shikimate + NADP(+) = 3-dehydroshikimate + NADPH + H(+). Its pathway is metabolic intermediate biosynthesis; chorismate biosynthesis; chorismate from D-erythrose 4-phosphate and phosphoenolpyruvate: step 4/7. Functionally, involved in the biosynthesis of the chorismate, which leads to the biosynthesis of aromatic amino acids. Catalyzes the reversible NADPH linked reduction of 3-dehydroshikimate (DHSA) to yield shikimate (SA). The polypeptide is Shikimate dehydrogenase (NADP(+)) (Methanococcus aeolicus (strain ATCC BAA-1280 / DSM 17508 / OCM 812 / Nankai-3)).